The sequence spans 570 residues: NADPH oxidase 2 (570 aa).

Residues 2–9 are Cytoplasmic-facing; the sequence is GNWAVNEG. The helical transmembrane segment at 10-36 threads the bilayer; sequence LSIFVILVWLGLNVFLFVWYYRVYDIP. Residues 37–46 are Extracellular-facing; the sequence is PKFFYTRKLL. The chain crosses the membrane as a helical span at residues 47–72; the sequence is GSALALARAPAACLNFNCMLILLPVC. A Ferric oxidoreductase domain is found at 54 to 286; the sequence is RAPAACLNFN…MFLYLCERLV (233 aa). At 73 to 95 the chain is on the cytoplasmic side; the sequence is RNLLSFLRGSSACCSTRVRRQLD. A helical membrane pass occupies residues 96–130; that stretch reads RNLTFHKMVAWMIALHSAIHTIAHLFNVEWCVNAR. 2 residues coordinate heme b: His-101 and His-115. At 131–163 the chain is on the extracellular side; that stretch reads VNNSDPYSVALSELGDRQNESYLNFARKRIKNP. 2 N-linked (GlcNAc...) asparagine glycosylation sites follow: Asn-132 and Asn-149. Lys-161 participates in a covalent cross-link: Glycyl lysine isopeptide (Lys-Gly) (interchain with G-Cter in ubiquitin). The helical transmembrane segment at 164 to 194 threads the bilayer; sequence EGGLYLAVTLLAGITGVVITLCLILIITSST. Residues 195–203 lie on the Cytoplasmic side of the membrane; it reads KTIRRSYFE. Positions 199 and 200 each coordinate FAD. The helical transmembrane segment at 204-222 threads the bilayer; that stretch reads VFWYTHHLFVIFFIGLAIH. Trp-206, His-209, His-222, Arg-226, and Ile-227 together coordinate heme b. The Extracellular portion of the chain corresponds to 223-267; sequence GAERIVRGQTAESLAVHNITVCEQKISEWGKIKECPIPQFAGNPP. A glycan (N-linked (GlcNAc...) asparagine) is linked at Asn-240. Lys-255 is covalently cross-linked (Glycyl lysine isopeptide (Lys-Gly) (interchain with G-Cter in ubiquitin)). Residues Met-268, Tyr-280, and Arg-287 each contribute to the heme b site. A helical transmembrane segment spans residues 268-285; it reads MTWKWIVGPMFLYLCERL. Over 286–570 the chain is Cytoplasmic; that stretch reads VRFWRSQQKV…VHFIFNKENF (285 aa). Residues 287 to 397 form the FAD-binding FR-type domain; it reads RFWRSQQKVV…DGPFGTASED (111 aa). Residues Lys-294, Lys-299, Lys-306, Lys-328, and Lys-334 each participate in a glycyl lysine isopeptide (Lys-Gly) (interchain with G-Cter in ubiquitin) cross-link. The FAD site is built by Trp-337, His-338, Pro-339, Thr-341, His-354, Arg-356, Trp-361, and Thr-362. Lys-381 participates in a covalent cross-link: Glycyl lysine isopeptide (Lys-Gly) (interchain with G-Cter in ubiquitin). NADPH-binding residues include Ile-411, Arg-446, and Thr-481. Lys-506 participates in a covalent cross-link: Glycyl lysine isopeptide (Lys-Gly) (interchain with G-Cter in ubiquitin). Arg-513 contacts NADPH. Lys-567 is covalently cross-linked (Glycyl lysine isopeptide (Lys-Gly) (interchain with G-Cter in ubiquitin)).

As to quaternary structure, component of the phagocyte NADPH oxidase core complex/cytochrome b558 complex, composed of CYBB (heavy chain (beta)) and CYBA (light chain (alpha)). Component of the phagocyte NADPH oxidase complex composed of an obligatory core heterodimer formed by the membrane proteins CYBA and CYBB and the cytosolic regulatory subunits NCF1/p47-phox, NCF2/p67-phox, NCF4/p40-phox and the small GTPase RAC1 or RAC2. Interacts with NCF1 (phosphorylated form). Interacts with NCF2; the interaction is enhanced in the presence of GBP7. Interacts with RAC2. Interacts with RAC1. Interacts with calprotectin (S100A8/9). Interacts with NRROS; the interaction is direct and impairs formation of a stable NADPH oxidase complex. Interacts with CYBC1; CYBC1 may act as a chaperone stabilizing Cytochrome b-245 heterodimer. The CYBA-CYBB complex interacts with GBP7. FAD is required as a cofactor. Glycosylated. Post-translationally, phosphorylated on Ser and Thr residues by PKC during neutrophils activation. Phosphorylation enhances the NADPH oxidase activity and stimulates its interaction with RAC2, NCF2/p67-phox, and NCF1/p47-phox. In terms of processing, undergoes 'Lys-48'-linked polyubiquitination, likely by RNF145, triggering endoplasmic reticulum-associated degradation. As to expression, detected in neutrophils (at protein level).

It is found in the cell membrane. It catalyses the reaction NADPH + 2 O2 = 2 superoxide + NADP(+) + H(+). In terms of biological role, catalytic subunit of the phagocyte NADPH oxidase complex that mediates the transfer of electrons from cytosolic NADPH to O2 to produce the superoxide anion (O2(-)). In the activated complex, electrons are first transferred from NADPH to flavin adenine dinucleotide (FAD) and subsequently transferred via two heme molecules to molecular oxygen, producing superoxide through an outer-sphere reaction. Activation of the NADPH oxidase complex is initiated by the assembly of cytosolic subunits of the NADPH oxidase complex with the core NADPH oxidase complex to form a complex at the plasma membrane or phagosomal membrane. This activation process is initiated by phosphorylation dependent binding of the cytosolic NCF1/p47-phox subunit to the C-terminus of CYBA/p22-phox. NADPH oxidase complex assembly is impaired through interaction with NRROS. The protein is NADPH oxidase 2 of Homo sapiens (Human).